We begin with the raw amino-acid sequence, 446 residues long: tRNA-2-methylthio-N(6)-dimethylallyladenosine synthase (446 aa).

An MTTase N-terminal domain is found at 8–124; that stretch reads KTYRVKSFGC…LPGMIDAAVA (117 aa). [4Fe-4S] cluster is bound by residues Cys-17, Cys-53, Cys-87, Cys-160, Cys-164, and Cys-167. The 233-residue stretch at 146–378 folds into the Radical SAM core domain; the sequence is RKSAPSAFLT…QAALNRDQAA (233 aa). In terms of domain architecture, TRAM spans 381–442; it reads AGSVGRTCEV…PNSLAGQLLE (62 aa).

It belongs to the methylthiotransferase family. MiaB subfamily. In terms of assembly, monomer. [4Fe-4S] cluster serves as cofactor.

The protein localises to the cytoplasm. It carries out the reaction N(6)-dimethylallyladenosine(37) in tRNA + (sulfur carrier)-SH + AH2 + 2 S-adenosyl-L-methionine = 2-methylsulfanyl-N(6)-dimethylallyladenosine(37) in tRNA + (sulfur carrier)-H + 5'-deoxyadenosine + L-methionine + A + S-adenosyl-L-homocysteine + 2 H(+). Its function is as follows. Catalyzes the methylthiolation of N6-(dimethylallyl)adenosine (i(6)A), leading to the formation of 2-methylthio-N6-(dimethylallyl)adenosine (ms(2)i(6)A) at position 37 in tRNAs that read codons beginning with uridine. The chain is tRNA-2-methylthio-N(6)-dimethylallyladenosine synthase from Erythrobacter litoralis (strain HTCC2594).